The chain runs to 107 residues: Anti-adapter protein IraM (107 aa).

The protein belongs to the IraM/RssC family.

The protein resides in the cytoplasm. Inhibits RpoS proteolysis by regulating RssB activity, thereby increasing the stability of the sigma stress factor RpoS during magnesium starvation. The chain is Anti-adapter protein IraM from Shigella sonnei (strain Ss046).